A 639-amino-acid polypeptide reads, in one-letter code: Elongation factor 4 (639 aa).

The tr-type G domain occupies 39 to 221; the sequence is TMIRNFCIIA…EIVRRVPAPV (183 aa). Residues 51–56 and 168–171 each bind GTP; these read DHGKST and NKID.

This sequence belongs to the TRAFAC class translation factor GTPase superfamily. Classic translation factor GTPase family. LepA subfamily.

Its subcellular location is the cell membrane. It catalyses the reaction GTP + H2O = GDP + phosphate + H(+). In terms of biological role, required for accurate and efficient protein synthesis under certain stress conditions. May act as a fidelity factor of the translation reaction, by catalyzing a one-codon backward translocation of tRNAs on improperly translocated ribosomes. Back-translocation proceeds from a post-translocation (POST) complex to a pre-translocation (PRE) complex, thus giving elongation factor G a second chance to translocate the tRNAs correctly. Binds to ribosomes in a GTP-dependent manner. This Frankia casuarinae (strain DSM 45818 / CECT 9043 / HFP020203 / CcI3) protein is Elongation factor 4.